We begin with the raw amino-acid sequence, 164 residues long: FMN reductase (NADH) RutF (164 aa).

Belongs to the non-flavoprotein flavin reductase family. RutF subfamily.

The enzyme catalyses FMNH2 + NAD(+) = FMN + NADH + 2 H(+). In terms of biological role, catalyzes the reduction of FMN to FMNH2 which is used to reduce pyrimidine by RutA via the Rut pathway. This is FMN reductase (NADH) RutF from Escherichia coli O45:K1 (strain S88 / ExPEC).